Here is a 509-residue protein sequence, read N- to C-terminus: Maturase K (509 aa).

It belongs to the intron maturase 2 family. MatK subfamily.

It localises to the plastid. The protein localises to the chloroplast. Its function is as follows. Usually encoded in the trnK tRNA gene intron. Probably assists in splicing its own and other chloroplast group II introns. In Schlumbergera truncata (Thanksgiving cactus), this protein is Maturase K.